A 67-amino-acid polypeptide reads, in one-letter code: DNA gyrase inhibitor YacG (67 aa).

Zn(2+) contacts are provided by C9, C12, C28, and C32. The segment at 48 to 67 (PVSPDAEDELFSEELPPRAH) is disordered.

It belongs to the DNA gyrase inhibitor YacG family. In terms of assembly, interacts with GyrB. Zn(2+) serves as cofactor.

Functionally, inhibits all the catalytic activities of DNA gyrase by preventing its interaction with DNA. Acts by binding directly to the C-terminal domain of GyrB, which probably disrupts DNA binding by the gyrase. The polypeptide is DNA gyrase inhibitor YacG (Pseudomonas fluorescens (strain ATCC BAA-477 / NRRL B-23932 / Pf-5)).